The sequence spans 387 residues: 3-hydroxy-D-aspartate aldolase (387 aa).

Residue Lys-62 is modified to N6-(pyridoxal phosphate)lysine. Pyridoxal 5'-phosphate is bound by residues Gln-85, Thr-238, 256-257 (GS), and Tyr-265. The Mg(2+) site is built by His-355 and Asp-357.

It belongs to the DSD1 family. Homodimer. Pyridoxal 5'-phosphate serves as cofactor. Mg(2+) is required as a cofactor.

It catalyses the reaction (3S)-3-hydroxy-D-aspartate = glyoxylate + glycine. The enzyme catalyses (3R)-3-hydroxy-D-aspartate = glyoxylate + glycine. Its function is as follows. Catalyzes the condensation of glyoxylate and glycine into (2R,3S)-beta-hydroxyaspartate ((3S)-3-hydroxy-D-aspartate). Is essential for the growth of P.denitrificans in the presence of glycolate and glyoxylate since it functions in glyoxylate assimilation via the beta-hydroxyaspartate cycle (BHAC). Is also able to catalyze the reverse reaction in vitro, i.e. the cleavage of (3S)-3-hydroxy-D-aspartate, and that of D-threonine to a lesser extent. In Paracoccus denitrificans (strain Pd 1222), this protein is 3-hydroxy-D-aspartate aldolase.